Here is a 177-residue protein sequence, read N- to C-terminus: Large ribosomal subunit protein uL6 (177 aa).

Belongs to the universal ribosomal protein uL6 family. In terms of assembly, part of the 50S ribosomal subunit.

In terms of biological role, this protein binds to the 23S rRNA, and is important in its secondary structure. It is located near the subunit interface in the base of the L7/L12 stalk, and near the tRNA binding site of the peptidyltransferase center. This Roseobacter denitrificans (strain ATCC 33942 / OCh 114) (Erythrobacter sp. (strain OCh 114)) protein is Large ribosomal subunit protein uL6.